The chain runs to 713 residues: Polyribonucleotide nucleotidyltransferase (713 aa).

Mg(2+)-binding residues include D498 and D504. One can recognise a KH domain in the interval P565–K631. An S1 motif domain is found at G633–P701.

Belongs to the polyribonucleotide nucleotidyltransferase family. Mg(2+) serves as cofactor.

The protein resides in the cytoplasm. It catalyses the reaction RNA(n+1) + phosphate = RNA(n) + a ribonucleoside 5'-diphosphate. In terms of biological role, involved in mRNA degradation. Catalyzes the phosphorolysis of single-stranded polyribonucleotides processively in the 3'- to 5'-direction. This is Polyribonucleotide nucleotidyltransferase from Thermus thermophilus.